Reading from the N-terminus, the 169-residue chain is uncharacterized protein (169 aa).

Positions 4-160 (IEVKRLLVNY…EGVKEQLSED (157 aa)) constitute an N-acetyltransferase domain.

This is an uncharacterized protein from Halalkalibacterium halodurans (strain ATCC BAA-125 / DSM 18197 / FERM 7344 / JCM 9153 / C-125) (Bacillus halodurans).